Consider the following 833-residue polypeptide: Neurogenic locus protein delta (833 aa).

A signal peptide spans 1–18 (MHWIKCLLTAFICFTVIV). At 19 to 594 (QVHSSGSFEL…ARADGLTNAQ (576 aa)) the chain is on the extracellular side. Cystine bridges form between Cys-46/Cys-61 and Cys-68/Cys-82. Asn-98, Asn-137, and Asn-167 each carry an N-linked (GlcNAc...) asparagine glycan. One can recognise a DSL domain in the interval 182 to 226 (VTCDLNYYGSGCAKFCRPRDDSFGHSTCSETGEIICLTGWQGDYC). 30 disulfide bridges follow: Cys-184–Cys-193, Cys-197–Cys-209, Cys-217–Cys-226, Cys-231–Cys-240, Cys-235–Cys-246, Cys-248–Cys-257, Cys-260–Cys-271, Cys-266–Cys-277, Cys-279–Cys-288, Cys-295–Cys-307, Cys-301–Cys-317, Cys-319–Cys-328, Cys-335–Cys-348, Cys-342–Cys-360, Cys-362–Cys-371, Cys-378–Cys-388, Cys-383–Cys-404, Cys-406–Cys-415, Cys-422–Cys-433, Cys-427–Cys-439, Cys-441–Cys-450, Cys-457–Cys-468, Cys-462–Cys-477, Cys-479–Cys-488, Cys-495–Cys-506, Cys-500–Cys-515, Cys-517–Cys-526, Cys-533–Cys-544, Cys-538–Cys-553, and Cys-555–Cys-564. EGF-like domains lie at 227–258 (HIPKCAKGCEHGHCDKPNQCVCQLGWKGALCN), 256–289 (LCNECVLEPNCIHGTCNKPWTCICNEGWGGLYCN), 291–329 (DLNYCTNHRPCKNGGTCFNTGEGLYTCKCAPGYSGDDCE), 331–372 (EIYS…KMCE), 374–416 (KVLT…PNCD), and 418–451 (QLDNCSPNPCINGGSCQPSGKCICPAGFSGTRCE). The EGF-like 7; calcium-binding domain maps to 453-489 (NIDDCLGHQCENGGTCIDMVNQYRCQCVPGFHGTHCS). The 37-residue stretch at 491–527 (KVDLCLIRPCANGGTCLNLNNDYQCTCRAGFTGKDCS) folds into the EGF-like 8 domain. An EGF-like 9; calcium-binding domain is found at 529 to 565 (DIDECSSGPCHNGGTCMNRVNSFECVCANGFRGKQCD). The helical transmembrane segment at 595 to 617 (VVLIAVFSVAMPLVAVIAACVVF) threads the bilayer. Over 618 to 833 (CMKRKRKRAQ…RSVVCGTPHM (216 aa)) the chain is Cytoplasmic. Residue Thr-666 is modified to Phosphothreonine. Residues 743 to 773 (QLNTDPTLMHRGSPAGSSAKGASGGGPGAAE) form a disordered region. The segment covering 754–763 (GSPAGSSAKG) has biased composition (low complexity).

In terms of assembly, interacts with Notch (N) via the EGF repeats and the N EGF repeats. Ubiquitinated by Mib, leading to its endocytosis and subsequent degradation. As to expression, detected in all areas with neurogenic abilities, for example the neurogenic ectoderm and the primordia of the sense organs. Later expression is restricted to those cells that have adopted a neural fate.

It localises to the membrane. Acts as a ligand for Notch (N) receptor. Essential for proper differentiation of ectoderm. Delta is required for the correct separation of neural and epidermal cell lineages. Fringe (fng) acts in the Golgi to determine the type of O-linked fucose on the EGF modules in N, altering the ability of N to bind with Delta. O-fut1 also has a role in modulating the interaction. The polypeptide is Neurogenic locus protein delta (Drosophila melanogaster (Fruit fly)).